The sequence spans 190 residues: Lysozyme g (190 aa).

The span at 1-10 (MPYGKIEDIK) shows a compositional bias: basic and acidic residues. Positions 1 to 31 (MPYGKIEDIKTSGASDVTAAQDGLKEGGWKS) are disordered. Active-site residues include glutamate 71 and aspartate 84.

The protein belongs to the glycosyl hydrolase 23 family.

The catalysed reaction is Hydrolysis of (1-&gt;4)-beta-linkages between N-acetylmuramic acid and N-acetyl-D-glucosamine residues in a peptidoglycan and between N-acetyl-D-glucosamine residues in chitodextrins.. This Takifugu rubripes (Japanese pufferfish) protein is Lysozyme g.